Here is a 117-residue protein sequence, read N- to C-terminus: G antigen 12I (117 aa).

Residues Met1–Cys117 form a disordered region. 2 stretches are compositionally biased toward acidic residues: residues Phe32–Glu45 and Glu87–Glu96. Residues Glu103 to Cys117 are compositionally biased toward basic and acidic residues.

This sequence belongs to the GAGE family. As to quaternary structure, forms tetramers.

This chain is G antigen 12I (GAGE12I), found in Homo sapiens (Human).